The following is a 430-amino-acid chain: Pyrroloquinoline quinone-dependent sugar dehydrogenase (430 aa).

An N-terminal signal peptide occupies residues 1–23 (MARLAPHTLLLALFVFLFGSCTA). Asn25 carries an N-linked (GlcNAc...) asparagine glycan. Arg57 provides a ligand contact to pyrroloquinoline quinone. Residues Asn94 and Asn147 are each glycosylated (N-linked (GlcNAc...) asparagine). Pyrroloquinoline quinone is bound at residue His153. An N-linked (GlcNAc...) asparagine glycan is attached at Asn184. Residue Arg220 participates in pyrroloquinoline quinone binding. 2 residues coordinate Ca(2+): Ser240 and Asp242. Cys281 and Cys316 are joined by a disulfide. N-linked (GlcNAc...) asparagine glycosylation is present at Asn306. His330 is a pyrroloquinoline quinone binding site. Asn341 is a glycosylation site (N-linked (GlcNAc...) asparagine). A pyrroloquinoline quinone-binding site is contributed by His350. Residues Cys388 and Cys392 are joined by a disulfide bond.

This sequence belongs to the sugar dehydrogenase AA12 family. Ca(2+) serves as cofactor. Requires pyrroloquinoline quinone as cofactor.

It localises to the secreted. In terms of biological role, pyrroloquinoline quinone (PPQ)-dependent oxidoreductase that catalyzes the oxidation of various sugars such as L-fucose. This is Pyrroloquinoline quinone-dependent sugar dehydrogenase from Hypocrea jecorina (strain QM6a) (Trichoderma reesei).